The sequence spans 334 residues: HTH-type transcriptional repressor PurR (334 aa).

Residues 2 to 56 (ATIKDVARLAGVSTTTVSHVINKTRFVAEATQEKVMKAVDELNYAPSAVARSLKC) form the HTH lacI-type domain. The segment at residues 4–23 (IKDVARLAGVSTTTVSHVIN) is a DNA-binding region (H-T-H motif). The DNA-binding element occupies 48 to 56 (SAVARSLKC). Positions 73, 189, 220, and 274 each coordinate hypoxanthine.

Homodimer.

Its pathway is purine metabolism; purine nucleotide biosynthesis [regulation]. Functionally, is the main repressor of the genes involved in the de novo synthesis of purine nucleotides, regulating purB, purC, purEK, purF, purHD, purL, purMN and guaBA expression. PurR is allosterically activated to bind its cognate DNA by binding the purine corepressors, hypoxanthine or guanine, thereby effecting transcription repression. The sequence is that of HTH-type transcriptional repressor PurR from Vibrio vulnificus (strain CMCP6).